A 47-amino-acid chain; its full sequence is Protein YtiD (47 aa).

This is Protein YtiD (ytiD) from Escherichia coli (strain K12).